The primary structure comprises 338 residues: Ankyrin-repeat domain containing transcription coregulator asaA (338 aa).

Residues 1 to 10 (MGAPHEEIQA) show a composition bias toward basic and acidic residues. 2 disordered regions span residues 1–70 (MGAP…LRST) and 112–137 (ASSV…PFID). Positions 11-33 (LKRRREQNRLAQRRRRDNVRRRL) are enriched in basic residues. Positions 42–70 (SPASASQTSLCSSTDSRVTLNPHQSLRST) are enriched in polar residues. A compositionally biased stretch (low complexity) spans 112-130 (ASSVSPSSSAGPLSSSPSP). ANK repeat units lie at residues 235-264 (RWTT…DPNA), 268-297 (EGAT…DPTL), and 301-330 (AGWL…PVDY).

The protein operates within secondary metabolite biosynthesis. Its function is as follows. Transcription coregulator involved in regulation of gene cluster that mediates the biosynthesis of aspergillic acid, a hydroxamic acid-containing pyrazinone with aliphatic side chains that originates from leucine (Leu) and isoleucine (Ile). Aspergillic acid has antibiotic properties and was shown to be lethal to mice. This Aspergillus flavus (strain ATCC 200026 / FGSC A1120 / IAM 13836 / NRRL 3357 / JCM 12722 / SRRC 167) protein is Ankyrin-repeat domain containing transcription coregulator asaA.